The chain runs to 1455 residues: DNA polymerase II large subunit (1455 aa).

The interval 1409-1440 is disordered; sequence GLLENLSNGSKKTEKAEKAEKPRKKSDEKPKK. Residues 1419 to 1438 are compositionally biased toward basic and acidic residues; that stretch reads KKTEKAEKAEKPRKKSDEKP.

The protein belongs to the archaeal DNA polymerase II family. Heterodimer of a large subunit and a small subunit. Post-translationally, this protein undergoes a protein self splicing that involves a post-translational excision of the intervening region (intein) followed by peptide ligation.

The catalysed reaction is DNA(n) + a 2'-deoxyribonucleoside 5'-triphosphate = DNA(n+1) + diphosphate. It carries out the reaction Exonucleolytic cleavage in the 3'- to 5'-direction to yield nucleoside 5'-phosphates.. Possesses two activities: a DNA synthesis (polymerase) and an exonucleolytic activity that degrades single-stranded DNA in the 3'- to 5'-direction. Has a template-primer preference which is characteristic of a replicative DNA polymerase. In Pyrococcus abyssi (strain GE5 / Orsay), this protein is DNA polymerase II large subunit (polC).